Consider the following 673-residue polypeptide: DNA topoisomerase 1 (673 aa).

The 134-residue stretch at 1-134 (MVAEKPKAAA…ARRMKFSTLA (134 aa)) folds into the Toprim domain. Mg(2+) is bound by residues E4 and D103. The Topo IA-type catalytic domain occupies 149–568 (DVEMIEAGMA…MSKKTISKLL (420 aa)). Residues 189–194 (SAGRVQ) are interaction with DNA. Y311 acts as the O-(5'-phospho-DNA)-tyrosine intermediate in catalysis. A disordered region spans residues 352-374 (LRPVQGSKDDPAHPAIHPTGEKP). The segment at 595-615 (CHLCGRKAVSAVSGYRLCSHH) adopts a C4-type zinc-finger fold.

Belongs to the type IA topoisomerase family. In terms of assembly, monomer. It depends on Mg(2+) as a cofactor.

It catalyses the reaction ATP-independent breakage of single-stranded DNA, followed by passage and rejoining.. Functionally, releases the supercoiling and torsional tension of DNA, which is introduced during the DNA replication and transcription, by transiently cleaving and rejoining one strand of the DNA duplex. Introduces a single-strand break via transesterification at a target site in duplex DNA. The scissile phosphodiester is attacked by the catalytic tyrosine of the enzyme, resulting in the formation of a DNA-(5'-phosphotyrosyl)-enzyme intermediate and the expulsion of a 3'-OH DNA strand. The free DNA strand then undergoes passage around the unbroken strand, thus removing DNA supercoils. Finally, in the religation step, the DNA 3'-OH attacks the covalent intermediate to expel the active-site tyrosine and restore the DNA phosphodiester backbone. The polypeptide is DNA topoisomerase 1 (Aeropyrum pernix (strain ATCC 700893 / DSM 11879 / JCM 9820 / NBRC 100138 / K1)).